The chain runs to 78 residues: Musculoskeletal embryonic nuclear protein 1 (78 aa).

Disordered stretches follow at residues 1 to 33 (MSQP…QEIK) and 45 to 78 (QMGS…SVFG). A Nuclear localization signal motif is present at residues 6–14 (PVKKKRPPV). Basic and acidic residues predominate over residues 64–78 (VFEKSKDEPPKSVFG).

It belongs to the MUSTN1 family. In terms of tissue distribution, predominantly expressed in heart and skeletal muscle. Detected in skeletal muscle satellite cells where expression increases with cell proliferation.

The protein resides in the nucleus. Promotes the differentiation and proliferation of skeletal muscle satellite cells. This is Musculoskeletal embryonic nuclear protein 1 (MUSTN1) from Gallus gallus (Chicken).